The chain runs to 126 residues: Large ribosomal subunit protein uL22 (126 aa).

It belongs to the universal ribosomal protein uL22 family. Part of the 50S ribosomal subunit.

In terms of biological role, this protein binds specifically to 23S rRNA; its binding is stimulated by other ribosomal proteins, e.g. L4, L17, and L20. It is important during the early stages of 50S assembly. It makes multiple contacts with different domains of the 23S rRNA in the assembled 50S subunit and ribosome. Functionally, the globular domain of the protein is located near the polypeptide exit tunnel on the outside of the subunit, while an extended beta-hairpin is found that lines the wall of the exit tunnel in the center of the 70S ribosome. The sequence is that of Large ribosomal subunit protein uL22 from Zymomonas mobilis subsp. mobilis (strain ATCC 31821 / ZM4 / CP4).